The following is a 440-amino-acid chain: tRNA modification GTPase MnmE (440 aa).

(6S)-5-formyl-5,6,7,8-tetrahydrofolate is bound by residues Arg34, Glu94, and Arg134. The region spanning 229–367 (GVRVVLAGPP…LVALLLDRAA (139 aa)) is the TrmE-type G domain. Asn239 serves as a coordination point for K(+). Residues 239–244 (NAGKST), 258–264 (TPIAGTT), 283–286 (DTAG), and 348–350 (SAR) each bind GTP. Ser243 contributes to the Mg(2+) binding site. Thr258, Ile260, and Thr263 together coordinate K(+). Residue Thr264 participates in Mg(2+) binding. Lys440 is a binding site for (6S)-5-formyl-5,6,7,8-tetrahydrofolate.

Belongs to the TRAFAC class TrmE-Era-EngA-EngB-Septin-like GTPase superfamily. TrmE GTPase family. In terms of assembly, homodimer. Heterotetramer of two MnmE and two MnmG subunits. K(+) is required as a cofactor.

It is found in the cytoplasm. Its function is as follows. Exhibits a very high intrinsic GTPase hydrolysis rate. Involved in the addition of a carboxymethylaminomethyl (cmnm) group at the wobble position (U34) of certain tRNAs, forming tRNA-cmnm(5)s(2)U34. This Rhizorhabdus wittichii (strain DSM 6014 / CCUG 31198 / JCM 15750 / NBRC 105917 / EY 4224 / RW1) (Sphingomonas wittichii) protein is tRNA modification GTPase MnmE.